Reading from the N-terminus, the 120-residue chain is MIF-like protein mif-2 (120 aa).

This sequence belongs to the MIF family.

In Caenorhabditis elegans, this protein is MIF-like protein mif-2 (mif-2).